Consider the following 125-residue polypeptide: Small ribosomal subunit protein bS6 (125 aa).

The tract at residues 99–125 (PSIMMKSVEREEARKASTEASAPAQAQ) is disordered. Residues 105–115 (SVEREEARKAS) show a composition bias toward basic and acidic residues. Polar residues predominate over residues 116–125 (TEASAPAQAQ).

This sequence belongs to the bacterial ribosomal protein bS6 family.

Its function is as follows. Binds together with bS18 to 16S ribosomal RNA. This Bordetella petrii (strain ATCC BAA-461 / DSM 12804 / CCUG 43448) protein is Small ribosomal subunit protein bS6.